We begin with the raw amino-acid sequence, 644 residues long: Exoribonuclease 2 (644 aa).

The RNB domain occupies arginine 189–lysine 516. The 83-residue stretch at aspartate 561–valine 643 folds into the S1 motif domain.

It belongs to the RNR ribonuclease family. RNase II subfamily.

It localises to the cytoplasm. It carries out the reaction Exonucleolytic cleavage in the 3'- to 5'-direction to yield nucleoside 5'-phosphates.. Involved in mRNA degradation. Hydrolyzes single-stranded polyribonucleotides processively in the 3' to 5' direction. The sequence is that of Exoribonuclease 2 from Enterobacter sp. (strain 638).